Here is a 118-residue protein sequence, read N- to C-terminus: uncharacterized protein (118 aa).

This is an uncharacterized protein from Caenorhabditis elegans.